A 427-amino-acid chain; its full sequence is 3-phosphoshikimate 1-carboxyvinyltransferase (427 aa).

K20, S21, and R25 together coordinate 3-phosphoshikimate. K20 serves as a coordination point for phosphoenolpyruvate. Phosphoenolpyruvate-binding residues include G92 and R120. S166, Q168, D312, and K339 together coordinate 3-phosphoshikimate. Residue Q168 participates in phosphoenolpyruvate binding. D312 functions as the Proton acceptor in the catalytic mechanism. Positions 343 and 385 each coordinate phosphoenolpyruvate.

This sequence belongs to the EPSP synthase family. In terms of assembly, monomer.

It localises to the cytoplasm. It carries out the reaction 3-phosphoshikimate + phosphoenolpyruvate = 5-O-(1-carboxyvinyl)-3-phosphoshikimate + phosphate. The protein operates within metabolic intermediate biosynthesis; chorismate biosynthesis; chorismate from D-erythrose 4-phosphate and phosphoenolpyruvate: step 6/7. In terms of biological role, catalyzes the transfer of the enolpyruvyl moiety of phosphoenolpyruvate (PEP) to the 5-hydroxyl of shikimate-3-phosphate (S3P) to produce enolpyruvyl shikimate-3-phosphate and inorganic phosphate. The sequence is that of 3-phosphoshikimate 1-carboxyvinyltransferase from Streptococcus pneumoniae (strain 70585).